We begin with the raw amino-acid sequence, 269 residues long: Zinc transporter ZupT (269 aa).

8 helical membrane-spanning segments follow: residues 12–32 (AFSI…LVMF), 41–61 (LSFG…TEIF), 75–95 (DHAF…IALI), 126–146 (MMAA…TFFA), 152–172 (AVGM…GISI), 187–207 (VWAC…GYLV), 211–231 (FLSP…MVFL), and 249–269 (TVYG…LFHF). Residues asparagine 136 and glutamate 139 each contribute to the Fe(2+) site. Zn(2+)-binding residues include glutamate 139 and histidine 164. Residues asparagine 165, glutamate 168, and glutamate 197 each contribute to the Fe(2+) site. A Zn(2+)-binding site is contributed by glutamate 168.

It belongs to the ZIP transporter (TC 2.A.5) family. ZupT subfamily.

The protein localises to the cell inner membrane. It carries out the reaction Zn(2+)(in) = Zn(2+)(out). Its function is as follows. Mediates zinc uptake. May also transport other divalent cations. This Neisseria meningitidis serogroup B (strain ATCC BAA-335 / MC58) protein is Zinc transporter ZupT.